The sequence spans 353 residues: A-kinase anchor protein 7 isoforms delta and gamma (353 aa).

2 stretches are compositionally biased toward basic and acidic residues: residues 1–22 and 66–76; these read MERP…RGEE and RSKENRGDRND. Disordered regions lie at residues 1 to 33 and 47 to 85; these read MERP…SPVG and DDCG…KKAK. Residues Thr134 and 224-226 each bind AMP; that span reads HLT. CMP is bound by residues Thr134 and 224–226; that span reads HLT. The segment at 299–353 is PKA-RII-alpha subunit binding domain; it reads AELVRLSKRLVENAVLKAVQQYLEETQNKKQPGEGNSVKAEEGDRNGDGSDNNRK. An RI-alpha-binding region spans residues 300-324; it reads ELVRLSKRLVENAVLKAVQQYLEET. Positions 301-314 are RII-binding; the sequence is LVRLSKRLVENAVL. Residues 321 to 353 are disordered; sequence LEETQNKKQPGEGNSVKAEEGDRNGDGSDNNRK. Residues 337 to 353 are compositionally biased toward basic and acidic residues; the sequence is KAEEGDRNGDGSDNNRK.

Binds cAMP-dependent protein kinase (PKA). Interacts with PRKCA; only the cytoplasmic form is capable of interacting with PRKCA. In terms of tissue distribution, expressed highly in the heart, and moderately in brain, lung, liver, kidney and testis. Hardly detectable in spleen and skeletal muscle. In kidney, isoform Delta is expressed in the principal cells of the IMCD.

It is found in the nucleus. The protein localises to the cytoplasm. The protein resides in the cell membrane. Functionally, probably targets cAMP-dependent protein kinase (PKA) to the cellular membrane or cytoskeletal structures. The membrane-associated form reduces epithelial sodium channel (ENaC) activity, whereas the free cytoplasmic form may negatively regulate ENaC channel feedback inhibition by intracellular sodium. Isoform Delta may be involved in shuttling aquaporin-2 (AQP2) to the plasma membrane. The protein is A-kinase anchor protein 7 isoforms delta and gamma of Rattus norvegicus (Rat).